A 548-amino-acid chain; its full sequence is ATP synthase subunit alpha (548 aa).

172–179 (GDRKTGKT) contacts ATP.

This sequence belongs to the ATPase alpha/beta chains family. In terms of assembly, F-type ATPases have 2 components, CF(1) - the catalytic core - and CF(0) - the membrane proton channel. CF(1) has five subunits: alpha(3), beta(3), gamma(1), delta(1), epsilon(1). CF(0) has three main subunits: a(1), b(2) and c(9-12). The alpha and beta chains form an alternating ring which encloses part of the gamma chain. CF(1) is attached to CF(0) by a central stalk formed by the gamma and epsilon chains, while a peripheral stalk is formed by the delta and b chains.

The protein resides in the cell membrane. It carries out the reaction ATP + H2O + 4 H(+)(in) = ADP + phosphate + 5 H(+)(out). Its function is as follows. Produces ATP from ADP in the presence of a proton gradient across the membrane. The alpha chain is a regulatory subunit. This Mycobacteroides abscessus (strain ATCC 19977 / DSM 44196 / CCUG 20993 / CIP 104536 / JCM 13569 / NCTC 13031 / TMC 1543 / L948) (Mycobacterium abscessus) protein is ATP synthase subunit alpha.